The following is a 310-amino-acid chain: Translocator protein BipD (310 aa).

Coiled coils occupy residues 127–171 and 250–299; these read DPIL…LQDY and DTAR…AIST.

This sequence belongs to the invasin protein D family.

Its subcellular location is the secreted. In terms of biological role, required for invasion of epithelial cells, as well as for survival within host cells, escape from endocytic vesicles and subsequent actin-tail formation. Probably regulates the secretion of effectors BipB and BipC and their final integration into the target cell membrane. This is Translocator protein BipD (bipD) from Burkholderia mallei (strain NCTC 10247).